A 116-amino-acid chain; its full sequence is NADH-ubiquinone oxidoreductase chain 3 (116 aa).

3 helical membrane passes run 3–23 (LITT…TISF), 56–76 (FFLI…LLPL), and 87–107 (LTLI…IYEW).

Belongs to the complex I subunit 3 family.

The protein resides in the mitochondrion membrane. The enzyme catalyses a ubiquinone + NADH + 5 H(+)(in) = a ubiquinol + NAD(+) + 4 H(+)(out). Functionally, core subunit of the mitochondrial membrane respiratory chain NADH dehydrogenase (Complex I) that is believed to belong to the minimal assembly required for catalysis. Complex I functions in the transfer of electrons from NADH to the respiratory chain. The immediate electron acceptor for the enzyme is believed to be ubiquinone. This Oncorhynchus tshawytscha (Chinook salmon) protein is NADH-ubiquinone oxidoreductase chain 3 (MT-ND3).